Consider the following 560-residue polypeptide: Hemocyanin, units G and H (560 aa).

Cysteine 1 and cysteine 11 are disulfide-bonded. Positions cysteine 1–glutamate 184 are unit G. A cross-link (2'-(S-cysteinyl)-histidine (Cys-His)) is located at residues cysteine 12 to histidine 14. Cysteine 93 and cysteine 98 are disulfide-bonded. N-linked (GlcNAc...) asparagine glycosylation occurs at asparagine 142. A unit H region spans residues aspartate 185–arginine 560. A Cu cation-binding site is contributed by histidine 230. Cysteine 236 and cysteine 246 form a disulfide bridge. Asparagine 240 carries an N-linked (GlcNAc...) asparagine glycan. The segment at residues cysteine 247 to histidine 249 is a cross-link (2'-(S-cysteinyl)-histidine (Cys-His)). Histidine 249, histidine 258, histidine 358, histidine 362, and histidine 389 together coordinate Cu cation. 2 cysteine pairs are disulfide-bonded: cysteine 348-cysteine 415 and cysteine 476-cysteine 482.

It belongs to the tyrosinase family. Hemocyanin subfamily. As to quaternary structure, decamers of large identical subunits (390 kDa), each containing 8 globular oxygen-binding functional units. The cofactor is Cu(2+).

Hemocyanins are copper-containing oxygen carriers occurring freely dissolved in the hemolymph of many mollusks and arthropods. In Sepia officinalis (Common cuttlefish), this protein is Hemocyanin, units G and H.